Here is a 100-residue protein sequence, read N- to C-terminus: Urease subunit gamma (100 aa).

It belongs to the urease gamma subunit family. In terms of assembly, heterotrimer of UreA (gamma), UreB (beta) and UreC (alpha) subunits. Three heterotrimers associate to form the active enzyme.

Its subcellular location is the cytoplasm. It catalyses the reaction urea + 2 H2O + H(+) = hydrogencarbonate + 2 NH4(+). Its pathway is nitrogen metabolism; urea degradation; CO(2) and NH(3) from urea (urease route): step 1/1. This Rhodopseudomonas palustris (strain BisB5) protein is Urease subunit gamma.